Consider the following 588-residue polypeptide: Myc box-dependent-interacting protein 1 (588 aa).

A2 is subject to N-acetylalanine. Positions 2-122 (AEMGSKGVTA…DYHQKLVDQA (121 aa)) are interaction with BIN2. Coiled-coil stretches lie at residues 15–42 (ASNVQKKLTRAQEKVLQKLGKADETKDE) and 193–274 (HLVA…EKQH). A BAR domain is found at 29–276 (VLQKLGKADE…LVSLEKQHGS (248 aa)). Residues 279–355 (FTVKAQPSDS…PKHTPSKEMK (77 aa)) are disordered. A phosphoserine mark is found at S296, S298, and S304. Position 308 is a phosphothreonine (T308). Phosphoserine is present on residues S324 and S332. A clathrin-binding region spans residues 379-422 (FEAPGPFSEQASLLDLDFEPLPPVASPVKAPTPSGQSIPWDLWE). A disordered region spans residues 448–483 (PSQTAEPGPAQPAEASEVVGGTQEPGETAASEATSS). A compositionally biased stretch (low complexity) spans 474-483 (ETAASEATSS). One can recognise an SH3 domain in the interval 515–588 (GFMFKVQAQH…FPENFTERVQ (74 aa)).

As to quaternary structure, heterodimer with AMPH. Binds SH3GLB1. Interacts (via SH3 domain) with DNM1. Interacts with SYNJ1. Interacts (via SH3 domain) with DNM2. Interacts with CLTC. Interacts with AP2A2. Interacts with AP2B1. Interacts with MYC (via N-terminal transactivation domain); the interaction requires the integrity of the conserved MYC box regions 1 and 2. Interacts with BIN2. Interacts with SNX4. Interacts (via BAR domain) with BACE1. Binds (via BAR domain) F-actin. In terms of processing, phosphorylated by protein kinase C. As to expression, highly expressed in the brain and muscle. Isoform AMPH2-1 is expressed only in the brain where it is concentrated in axon initial segments and nodes of Ranvier. Isoform AMPH2-2 is widely expressed.

The protein localises to the nucleus. Its subcellular location is the cytoplasm. It is found in the endosome. It localises to the cell membrane. The protein resides in the sarcolemma. The protein localises to the T-tubule. Is a key player in the control of plasma membrane curvature, and membrane shaping and remodeling. Required in muscle cells for the formation of T-tubules, tubular invaginations of the plasma membrane that function in depolarization-contraction coupling. Required in muscle cells for the formation of T-tubules, tubular invaginations of the plasma membrane that function in depolarization-contraction coupling. Is a negative regulator of endocytosis. Is also involved in the regulation of intracellular vesicles sorting, modulation of BACE1 trafficking and the control of amyloid-beta production. In neuronal circuits, endocytosis regulation may influence the internalization of PHF-tau aggregates. May be involved in the regulation of MYC activity and the control cell proliferation. The polypeptide is Myc box-dependent-interacting protein 1 (Bin1) (Rattus norvegicus (Rat)).